Reading from the N-terminus, the 148-residue chain is MKVILLERINKLGRLGDVVEVRPGYGRNFLVPQGKAVVANQRNLEDFAARKAALEQVEAERLLAAQQRAAALADAMVTIALQAGEDGRLFGSVGLHDISAALAALGHEVAHSEIRLAGGPIKRIGEFPVRVHLHPEVELDVMVFVERA.

This sequence belongs to the bacterial ribosomal protein bL9 family.

Its function is as follows. Binds to the 23S rRNA. The protein is Large ribosomal subunit protein bL9 of Acidithiobacillus ferrooxidans (strain ATCC 23270 / DSM 14882 / CIP 104768 / NCIMB 8455) (Ferrobacillus ferrooxidans (strain ATCC 23270)).